Here is a 394-residue protein sequence, read N- to C-terminus: Elongation factor Tu (394 aa).

Positions K10–Q205 constitute a tr-type G domain. The tract at residues G19–T26 is G1. G19–T26 contributes to the GTP binding site. Mg(2+) is bound at residue T26. A G2 region spans residues G61–N65. Residues D82–G85 form a G3 region. GTP contacts are provided by residues D82–H86 and N137–D140. Positions N137–D140 are G4. The G5 stretch occupies residues S173–F175.

It belongs to the TRAFAC class translation factor GTPase superfamily. Classic translation factor GTPase family. EF-Tu/EF-1A subfamily. Monomer.

The protein resides in the cytoplasm. It catalyses the reaction GTP + H2O = GDP + phosphate + H(+). GTP hydrolase that promotes the GTP-dependent binding of aminoacyl-tRNA to the A-site of ribosomes during protein biosynthesis. This Borrelia turicatae (strain 91E135) protein is Elongation factor Tu.